We begin with the raw amino-acid sequence, 380 residues long: Cytochrome b (380 aa).

Transmembrane regions (helical) follow at residues 34-54 (FGSL…LLAM), 78-99 (WLIR…YLHI), 114-134 (WNTG…GYVL), and 179-199 (FFAL…IHLT). Heme b-binding residues include His-84 and His-98. Heme b-binding residues include His-183 and His-197. His-202 serves as a coordination point for a ubiquinone. 4 consecutive transmembrane segments (helical) span residues 227–247 (LKDF…ALFS), 289–309 (LGGV…PFLH), 321–341 (ISQL…WVGS), and 348–368 (FIII…ILFP).

The protein belongs to the cytochrome b family. The cytochrome bc1 complex contains 11 subunits: 3 respiratory subunits (MT-CYB, CYC1 and UQCRFS1), 2 core proteins (UQCRC1 and UQCRC2) and 6 low-molecular weight proteins (UQCRH/QCR6, UQCRB/QCR7, UQCRQ/QCR8, UQCR10/QCR9, UQCR11/QCR10 and a cleavage product of UQCRFS1). This cytochrome bc1 complex then forms a dimer. Requires heme b as cofactor.

The protein localises to the mitochondrion inner membrane. Functionally, component of the ubiquinol-cytochrome c reductase complex (complex III or cytochrome b-c1 complex) that is part of the mitochondrial respiratory chain. The b-c1 complex mediates electron transfer from ubiquinol to cytochrome c. Contributes to the generation of a proton gradient across the mitochondrial membrane that is then used for ATP synthesis. This chain is Cytochrome b (MT-CYB), found in Pelecanoides urinatrix (Common diving petrel).